The primary structure comprises 43 residues: Snake venom metalloproteinase crotalin (43 aa).

In terms of domain architecture, Peptidase M12B spans 1–43; that stretch reads LLRRKSHDHAQNHDGDKCLRGASLGYYQSFLNQYKPQCILNKP. Histidine 13 is a Zn(2+) binding site.

Belongs to the venom metalloproteinase (M12B) family. P-I subfamily. As to quaternary structure, monomer. The cofactor is Zn(2+). This protein autoproteolytically degrades to 10 kDa and 14 kDa fragments in the presence of SDS. Interestingly, the two fragments, as well as reduced crotalin are able to bind vWF, indicating that the binding activity does not require a specific protein conformation. In terms of tissue distribution, expressed by the venom gland.

It is found in the secreted. Functionally, snake venom zinc metalloproteinase that inhibits ristocin-induced platelet aggregation by abolishing the binding of von Willebrand factor (vWF) to platelet glycoprotein Ib alpha (GPIBA) through the cleavage of both GP1BA and vWF. Also has fibrinogenolytic activities by degrading the alpha- (FGA) and beta-chain (FGB) of fibrinogen. In vivo, induces a slight hemorrhage when applied to chick chorioallantoic membrane and has potent antithrombic effect. The protein is Snake venom metalloproteinase crotalin of Crotalus atrox (Western diamondback rattlesnake).